Reading from the N-terminus, the 118-residue chain is NADH-ubiquinone oxidoreductase chain 3 (118 aa).

A run of 3 helical transmembrane segments spans residues 9 to 29 (IYLVISLLVSLILLGVPFLFA), 62 to 82 (LVSILFIIFDLEVTFFFPWAV), and 87 to 107 (IDLFGFWSMMAFLLILTIGFL).

The protein belongs to the complex I subunit 3 family.

Its subcellular location is the mitochondrion membrane. It carries out the reaction a ubiquinone + NADH + 5 H(+)(in) = a ubiquinol + NAD(+) + 4 H(+)(out). Its function is as follows. Core subunit of the mitochondrial membrane respiratory chain NADH dehydrogenase (Complex I) that is believed to belong to the minimal assembly required for catalysis. Complex I functions in the transfer of electrons from NADH to the respiratory chain. The immediate electron acceptor for the enzyme is believed to be ubiquinone. This Triticum aestivum (Wheat) protein is NADH-ubiquinone oxidoreductase chain 3 (ND3).